Here is an 83-residue protein sequence, read N- to C-terminus: Short neurotoxin B (83 aa).

Positions 1–21 (MKTLLLTLVVVTIVCLDLGYT) are cleaved as a signal peptide. 4 cysteine pairs are disulfide-bonded: Cys24/Cys45, Cys38/Cys62, Cys64/Cys75, and Cys76/Cys81.

It belongs to the three-finger toxin family. Short-chain subfamily. Type I alpha-neurotoxin sub-subfamily. As to expression, expressed by the venom gland.

The protein resides in the secreted. Functionally, binds to muscle nicotinic acetylcholine receptor (nAChR) and inhibit acetylcholine from binding to the receptor, thereby impairing neuromuscular transmission. In Laticauda laticaudata (Blue-ringed sea krait), this protein is Short neurotoxin B.